The chain runs to 603 residues: Serine protease 56 (603 aa).

The signal sequence occupies residues 1-19 (MLLAVLLLLPLPSSWFAHG). A disordered region spans residues 64–96 (SHECRGSGRPRPQALLQDPPEPGPCGERRPSTA). Asn97 is a glycosylation site (N-linked (GlcNAc...) asparagine). Residues 105 to 337 (IVGGSAAPPG…FKDWLQEQMS (233 aa)) enclose the Peptidase S1 domain. A disulfide bond links Cys130 and Cys146. Active-site charge relay system residues include His145 and Asp191. 3 disulfide bridges follow: Cys225-Cys292, Cys256-Cys271, and Cys282-Cys313. Ser286 serves as the catalytic Charge relay system. 2 disordered regions span residues 442 to 474 (PARE…NGCP) and 573 to 603 (EGPW…ARQP).

The protein belongs to the peptidase S1 family. Expressed neural retina, cornea, sclera and optic nerve.

Functionally, serine protease required during eye development. The chain is Serine protease 56 (PRSS56) from Homo sapiens (Human).